We begin with the raw amino-acid sequence, 507 residues long: ATP synthase subunit alpha, chloroplastic (507 aa).

170–177 lines the ATP pocket; it reads GDRQTGKT. A Phosphothreonine modification is found at Thr-257.

It belongs to the ATPase alpha/beta chains family. F-type ATPases have 2 components, CF(1) - the catalytic core - and CF(0) - the membrane proton channel. CF(1) has five subunits: alpha(3), beta(3), gamma(1), delta(1), epsilon(1). CF(0) has four main subunits: a, b, b' and c.

Its subcellular location is the plastid. It localises to the chloroplast thylakoid membrane. It catalyses the reaction ATP + H2O + 4 H(+)(in) = ADP + phosphate + 5 H(+)(out). Produces ATP from ADP in the presence of a proton gradient across the membrane. The alpha chain is a regulatory subunit. This Draba nemorosa (Woodland whitlowgrass) protein is ATP synthase subunit alpha, chloroplastic.